The primary structure comprises 364 residues: tRNA-specific 2-thiouridylase MnmA (364 aa).

ATP contacts are provided by residues 13–20 and Met-39; that span reads GMSGGVDS. The interval 99–101 is interaction with target base in tRNA; it reads NPD. Cys-104 functions as the Nucleophile in the catalytic mechanism. Cys-104 and Cys-200 form a disulfide bridge. Gly-128 is a binding site for ATP. Residues 150–152 form an interaction with tRNA region; sequence KDQ. The active-site Cysteine persulfide intermediate is the Cys-200. The interval 310–311 is interaction with tRNA; that stretch reads RY.

It belongs to the MnmA/TRMU family.

It is found in the cytoplasm. The catalysed reaction is S-sulfanyl-L-cysteinyl-[protein] + uridine(34) in tRNA + AH2 + ATP = 2-thiouridine(34) in tRNA + L-cysteinyl-[protein] + A + AMP + diphosphate + H(+). Its function is as follows. Catalyzes the 2-thiolation of uridine at the wobble position (U34) of tRNA, leading to the formation of s(2)U34. The sequence is that of tRNA-specific 2-thiouridylase MnmA from Alkaliphilus oremlandii (strain OhILAs) (Clostridium oremlandii (strain OhILAs)).